Reading from the N-terminus, the 211-residue chain is Protein Nef (211 aa).

A lipid anchor (N-myristoyl glycine; by host) is attached at glycine 2. Phosphoserine; by host is present on serine 6. The segment at 67–70 (EDEE) is acidic; interacts with host PACS1 and PACS2; stabilizes the interaction of NEF/MHC-I with host AP1M1; necessary for MHC-I internalization. Residues 74 to 83 (PVRPQVPLRP) are SH3-binding; interaction with Src family tyrosine kinases. Residues 77–80 (PQVP) carry the PxxP; stabilizes the interaction of NEF/MHC-I with host AP1M1; necessary for MHC-I internalization motif. Residues 113 to 129 (DILDLWVYHTQGYFPDW) are mediates dimerization, Nef-PTE1 interaction. The interval 153–185 (MDPDQVEEANEGENNSLLHPISLHGMDDPEKEV) is binding to ATP6V1H. The Dileucine internalization motif; necessary for CD4 internalization motif lies at 169–170 (LL). Positions 179 to 180 (DD) match the Diacidic; necessary for CD4 internalization motif.

This sequence belongs to the lentivirus primate group Nef protein family. In terms of assembly, monomer; cytosolic form. Homodimer; membrane bound form. Interacts with Nef associated p21-activated kinase (PAK2); this interaction activates PAK2. Associates with the Nef-MHC-I-AP1 complex; this complex is required for MHC-I internalization. Interacts (via C-terminus) with host PI3-kinase. Interacts with host PACS1; this interaction seems to be weak. Interacts with host PACS2. Interacts with host LCK and MAPK3; these interactions inhibit the kinase activity of the latter. Interacts with host ATP6V1H; this interaction may play a role in CD4 endocytosis. Associates with the CD4-Nef-AP2 complex; this complex is required for CD4 internalization. Interacts with host AP2 subunit alpha and AP2 subunit sigma2. Interacts with TCR-zeta chain; this interaction up-regulates the Fas ligand (FasL) surface expression. Interacts with host HCK, LYN, and SRC; these interactions activate the Src family kinases. Interacts with MAP3K5; this interaction inhibits the Fas and TNFR-mediated death signals. Interacts with beta-COP and PTE1. Interacts with human RACK1; this increases Nef phosphorylation by PKC. Interacts with TP53; this interaction decreases the half-life of TP53, protecting the infected cell against p53-mediated apoptosis. In terms of processing, the virion-associated Nef proteins are cleaved by the viral protease to release the soluble C-terminal core protein. Nef is probably cleaved concomitantly with viral structural proteins on maturation of virus particles. Myristoylated. Post-translationally, phosphorylated on serine residues, probably by host PKCdelta and theta.

The protein resides in the host cell membrane. Its subcellular location is the virion. The protein localises to the secreted. It is found in the host Golgi apparatus membrane. Its function is as follows. Factor of infectivity and pathogenicity, required for optimal virus replication. Alters numerous pathways of T-lymphocyte function and down-regulates immunity surface molecules in order to evade host defense and increase viral infectivity. Alters the functionality of other immunity cells, like dendritic cells, monocytes/macrophages and NK cells. Functionally, in infected CD4(+) T-lymphocytes, down-regulates the surface MHC-I, mature MHC-II, CD4, CD28, CCR5 and CXCR4 molecules. Mediates internalization and degradation of host CD4 through the interaction of with the cytoplasmic tail of CD4, the recruitment of AP-2 (clathrin adapter protein complex 2), internalization through clathrin coated pits, and subsequent transport to endosomes and lysosomes for degradation. Diverts host MHC-I molecules to the trans-Golgi network-associated endosomal compartments by an endocytic pathway to finally target them for degradation. MHC-I down-regulation may involve AP-1 (clathrin adapter protein complex 1) or possibly Src family kinase-ZAP70/Syk-PI3K cascade recruited by PACS2. In consequence infected cells are masked for immune recognition by cytotoxic T-lymphocytes. Decreasing the number of immune receptors also prevents reinfection by more HIV particles (superinfection). Down-regulates host SERINC3 and SERINC5 thereby excluding these proteins from the viral particles. Virion infectivity is drastically higher when SERINC3 or SERINC5 are excluded from the viral envelope, because these host antiviral proteins impair the membrane fusion event necessary for subsequent virion penetration. In terms of biological role, bypasses host T-cell signaling by inducing a transcriptional program nearly identical to that of anti-CD3 cell activation. Interaction with TCR-zeta chain up-regulates the Fas ligand (FasL). Increasing surface FasL molecules and decreasing surface MHC-I molecules on infected CD4(+) cells send attacking cytotoxic CD8+ T-lymphocytes into apoptosis. Plays a role in optimizing the host cell environment for viral replication without causing cell death by apoptosis. Protects the infected cells from apoptosis in order to keep them alive until the next virus generation is ready to strike. Inhibits the Fas and TNFR-mediated death signals by blocking MAP3K5/ASK1. Decreases the half-life of TP53, protecting the infected cell against p53-mediated apoptosis. Inhibits the apoptotic signals regulated by the Bcl-2 family proteins through the formation of a Nef/PI3-kinase/PAK2 complex that leads to activation of PAK2 and induces phosphorylation of host BAD. Its function is as follows. Extracellular Nef protein targets CD4(+) T-lymphocytes for apoptosis by interacting with CXCR4 surface receptors. This Homo sapiens (Human) protein is Protein Nef.